The sequence spans 404 residues: Glucose-1-phosphate adenylyltransferase 2 (404 aa).

Alpha-D-glucose 1-phosphate contacts are provided by residues Tyr97, Gly162, 177–178 (EK), and Ser195.

It belongs to the bacterial/plant glucose-1-phosphate adenylyltransferase family. In terms of assembly, homotetramer.

It carries out the reaction alpha-D-glucose 1-phosphate + ATP + H(+) = ADP-alpha-D-glucose + diphosphate. The protein operates within glycan biosynthesis; glycogen biosynthesis. Its function is as follows. Involved in the biosynthesis of ADP-glucose, a building block required for the elongation reactions to produce glycogen. Catalyzes the reaction between ATP and alpha-D-glucose 1-phosphate (G1P) to produce pyrophosphate and ADP-Glc. The chain is Glucose-1-phosphate adenylyltransferase 2 from Vibrio parahaemolyticus serotype O3:K6 (strain RIMD 2210633).